The following is a 682-amino-acid chain: Serine/threonine-protein kinase PLK2 (682 aa).

The interval 25 to 67 is disordered; it reads ACGGDSKKKRPQQPSEDGQPQAQVTPAAPHHHHHHSHSGPEIS. The span at 36-48 shows a compositional bias: polar residues; sequence QQPSEDGQPQAQV. In terms of domain architecture, Protein kinase spans 79 to 331; that stretch reads YCRGKVLGKG…LDDIIRHDFF (253 aa). Residues 85-93 and K108 each bind ATP; that span reads LGKGGFAKC. D202 acts as the Proton acceptor in catalysis. A Phosphothreonine modification is found at T236. Residues 403–432 form a disordered region; it reads SITQQPSKHRADEEPQPPPTTVARSGTSAV. POLO box domains are found at residues 500–578 and 598–682; these read WVTK…YMEE and YLLQ…QRCN.

Belongs to the protein kinase superfamily. Ser/Thr protein kinase family. CDC5/Polo subfamily. Interacts with NSF; causing NSF dissociation from GRIA2. Interacts with CIB1. Catalytic activity is enhanced by phosphorylation of Thr-236. As to expression, brain, lung and heart.

The protein localises to the cytoplasm. It is found in the cytoskeleton. The protein resides in the microtubule organizing center. Its subcellular location is the centrosome. It localises to the centriole. The protein localises to the cell projection. It is found in the dendrite. The enzyme catalyses L-seryl-[protein] + ATP = O-phospho-L-seryl-[protein] + ADP + H(+). The catalysed reaction is L-threonyl-[protein] + ATP = O-phospho-L-threonyl-[protein] + ADP + H(+). Its activity is regulated as follows. Activated by phosphorylation of Thr-236. Once activated, activity is stimulated by binding target proteins. Functionally, tumor suppressor serine/threonine-protein kinase involved in synaptic plasticity, centriole duplication and G1/S phase transition. Polo-like kinases act by binding and phosphorylating proteins that are already phosphorylated on a specific motif recognized by the POLO box domains. Phosphorylates CPAP, NPM1, RAPGEF2, RASGRF1, SNCA, SIPA1L1 and SYNGAP1. Plays a key role in synaptic plasticity and memory by regulating the Ras and Rap protein signaling: required for overactivity-dependent spine remodeling by phosphorylating the Ras activator RASGRF1 and the Rap inhibitor SIPA1L1 leading to their degradation by the proteasome. Conversely, phosphorylates the Rap activator RAPGEF2 and the Ras inhibitor SYNGAP1, promoting their activity. Also regulates synaptic plasticity independently of kinase activity, via its interaction with NSF that disrupts the interaction between NSF and the GRIA2 subunit of AMPARs, leading to a rapid rundown of AMPAR-mediated current that occludes long term depression. Required for procentriole formation and centriole duplication by phosphorylating CPAP and NPM1, respectively. Its induction by p53/TP53 suggests that it may participate in the mitotic checkpoint following stress. The polypeptide is Serine/threonine-protein kinase PLK2 (Plk2) (Mus musculus (Mouse)).